The primary structure comprises 628 residues: tRNA(Thr) (cytosine(32)-N(3))-methyltransferase (628 aa).

Residues 1–18 (MGVADLIKKFESISKEEG) show a composition bias toward basic and acidic residues. Disordered regions lie at residues 1-106 (MGVA…GENA), 124-269 (AEVL…VNDL), and 302-331 (NIAHEGRGDNTGDQNAVEKSDFEKSDTEGS). Over residues 22–31 (VDTNSSSKPL) the composition is skewed to polar residues. Positions 32–42 (KSNDETKELHQ) are enriched in basic and acidic residues. A compositionally biased stretch (acidic residues) spans 53 to 62 (DVNEEFENEP). Ser-93 carries the phosphoserine modification. Residues 132-146 (EESDAIQEGVAEETE) show a composition bias toward acidic residues. Thr-150 is modified (phosphothreonine). Residues 173–186 (PAEEYSQSEEDADI) show a composition bias toward acidic residues. Polar residues predominate over residues 196–207 (NAENASQQANDG). The span at 215–230 (KNKKKKNKKKNKKKRN) shows a compositional bias: basic residues. Over residues 231–240 (GNVNTNANVD) the composition is skewed to polar residues. 2 positions are modified to phosphoserine: Ser-321 and Ser-326. Thr-347 is subject to Phosphothreonine. Residues Trp-399, Tyr-403, Gly-441, Asp-466, Asp-492, Leu-493, and Ile-515 each contribute to the S-adenosyl-L-methionine site.

Belongs to the methyltransferase superfamily. METL family. As to quaternary structure, interacts with SES1.

It is found in the cytoplasm. The protein localises to the cytoskeleton. The enzyme catalyses cytidine(32) in tRNA(Thr) + S-adenosyl-L-methionine = N(3)-methylcytidine(32) in tRNA(Thr) + S-adenosyl-L-homocysteine + H(+). It catalyses the reaction cytidine(32) in tRNA(Ser) + S-adenosyl-L-methionine = N(3)-methylcytidine(32) in tRNA(Ser) + S-adenosyl-L-homocysteine + H(+). Functionally, S-adenosyl-L-methionine-dependent methyltransferase that mediates N(3)-methylcytidine modification of residue 32 of the tRNA anticodon loop of tRNA(Thr) and tRNA(Ser). N(3)-methylcytidine methylation of tRNA(Thr) requires the N6-threonylcarbamoylation of tRNA (t6A37) by the EKC/KEOPS complex as prerequisite. N(3)-methylcytidine methylation of tRNA(Ser) requires the formation of N(6)-dimethylallyladenosine(37) (i6A37) by MOD5 as prerequisite. Methylation of tRNA(Ser) is also stimulated by SES1. Binds F-actin and shows weak F-actin cross-linking activity. The polypeptide is tRNA(Thr) (cytosine(32)-N(3))-methyltransferase (ABP140) (Saccharomyces cerevisiae (strain ATCC 204508 / S288c) (Baker's yeast)).